A 296-amino-acid polypeptide reads, in one-letter code: Cytidine deaminase (296 aa).

2 CMP/dCMP-type deaminase domains span residues 47 to 167 (TEAE…FGPK) and 186 to 296 (DSSD…VDPV). 88–90 (NLE) is a substrate binding site. Histidine 101 contributes to the Zn(2+) binding site. Glutamate 103 (proton donor) is an active-site residue. Zn(2+)-binding residues include cysteine 128 and cysteine 131.

This sequence belongs to the cytidine and deoxycytidylate deaminase family. Homodimer. The cofactor is Zn(2+).

It carries out the reaction cytidine + H2O + H(+) = uridine + NH4(+). It catalyses the reaction 2'-deoxycytidine + H2O + H(+) = 2'-deoxyuridine + NH4(+). This enzyme scavenges exogenous and endogenous cytidine and 2'-deoxycytidine for UMP synthesis. The chain is Cytidine deaminase from Shewanella sp. (strain MR-4).